A 334-amino-acid polypeptide reads, in one-letter code: Probable fructose-bisphosphate aldolase class 1 (334 aa).

This sequence belongs to the class I fructose-bisphosphate aldolase family.

The catalysed reaction is beta-D-fructose 1,6-bisphosphate = D-glyceraldehyde 3-phosphate + dihydroxyacetone phosphate. The protein operates within carbohydrate degradation; glycolysis; D-glyceraldehyde 3-phosphate and glycerone phosphate from D-glucose: step 4/4. The chain is Probable fructose-bisphosphate aldolase class 1 from Xylella fastidiosa (strain Temecula1 / ATCC 700964).